We begin with the raw amino-acid sequence, 480 residues long: UDP-N-acetylmuramate--L-alanine ligase (480 aa).

125–131 is a binding site for ATP; that stretch reads GTHGKTT.

It belongs to the MurCDEF family.

The protein resides in the cytoplasm. It carries out the reaction UDP-N-acetyl-alpha-D-muramate + L-alanine + ATP = UDP-N-acetyl-alpha-D-muramoyl-L-alanine + ADP + phosphate + H(+). It functions in the pathway cell wall biogenesis; peptidoglycan biosynthesis. Its function is as follows. Cell wall formation. This is UDP-N-acetylmuramate--L-alanine ligase from Ectopseudomonas mendocina (strain ymp) (Pseudomonas mendocina).